Here is a 299-residue protein sequence, read N- to C-terminus: Ficolin-3 (299 aa).

Positions 1 to 23 (MDLLWILPSLWLLLLGGPACLKT) are cleaved as a signal peptide. Residues 44 to 81 (PSCPGAPGSPGEKGAPGPQGPPGPPGKMGPKGEPGDPV) are disordered. The Collagen-like domain maps to 48–80 (GAPGSPGEKGAPGPQGPPGPPGKMGPKGEPGDP). Residues Pro-50, Pro-53, Pro-59, Pro-65, Pro-68, and Pro-77 each carry the hydroxyproline modification. Positions 61-70 (PQGPPGPPGK) are enriched in pro residues. The region spanning 84–299 (LRCQEGPRNC…PYRRVRMMLR (216 aa)) is the Fibrinogen C-terminal domain. 2 cysteine pairs are disulfide-bonded: Cys-86/Cys-110 and Cys-93/Cys-121. Residue Asn-189 is glycosylated (N-linked (GlcNAc...) (complex) asparagine). 4 residues coordinate Ca(2+): Asp-237, Asp-239, Ser-241, and Ser-243. Residues Cys-245 and Cys-258 are joined by a disulfide bond. A carbohydrate is bound at residue 258-259 (CY).

The protein belongs to the ficolin lectin family. Homotrimer. May form an octadecamer consisting of an elementary trimer unit. Does not interact with fibronectin, elastin or zymosan. Interacts with MASP1 and MASP2. Post-translationally, the N-terminus is blocked. Liver and lung. In liver it is produced by bile duct epithelial cells and hepatocytes. In lung it is produced by both ciliated bronchial epithelial cells and type II alveolar epithelial cells.

It is found in the secreted. May function in innate immunity through activation of the lectin complement pathway. Calcium-dependent and GlcNAc-binding lectin. Has affinity with GalNAc, GlcNAc, D-fucose, as mono/oligosaccharide and lipopolysaccharides from S.typhimurium and S.minnesota. In Homo sapiens (Human), this protein is Ficolin-3 (FCN3).